The primary structure comprises 573 residues: Probable D-xylulose kinase A (573 aa).

Residues His97, Arg168, Asp284, and Asn285 each contribute to the substrate site. ATP-binding positions include Trp366, 471–472 (GG), and Asn475.

This sequence belongs to the FGGY kinase family.

Its subcellular location is the cytoplasm. The catalysed reaction is D-xylulose + ATP = D-xylulose 5-phosphate + ADP + H(+). Functionally, highly specific D-xylulose kinase which participates in the catabolism of xylose. Xylose is a major component of hemicelluloses such as xylan. Most fungi utilize D-xylose via three enzymatic reactions, xylose reductase (XR), xylitol dehydrogenase (XDH), and xylulokinase, to form xylulose 5-phosphate, which enters pentose phosphate pathway. The polypeptide is Probable D-xylulose kinase A (xkiA) (Aspergillus fumigatus (strain ATCC MYA-4609 / CBS 101355 / FGSC A1100 / Af293) (Neosartorya fumigata)).